The following is a 322-amino-acid chain: Replication factor C small subunit (322 aa).

46 to 53 (GSAGIGKT) provides a ligand contact to ATP.

Belongs to the activator 1 small subunits family. RfcS subfamily. As to quaternary structure, heteromultimer composed of small subunits (RfcS) and large subunits (RfcL).

Its function is as follows. Part of the RFC clamp loader complex which loads the PCNA sliding clamp onto DNA. In Methanoculleus marisnigri (strain ATCC 35101 / DSM 1498 / JR1), this protein is Replication factor C small subunit.